Reading from the N-terminus, the 120-residue chain is NAD(P)H-quinone oxidoreductase subunit 3, chloroplastic (120 aa).

Helical transmembrane passes span 7–27 (YDSF…AFSI), 63–83 (YMFA…YPWA), and 89–109 (LGLF…VGLV).

The protein belongs to the complex I subunit 3 family. As to quaternary structure, NDH is composed of at least 16 different subunits, 5 of which are encoded in the nucleus.

The protein localises to the plastid. It localises to the chloroplast thylakoid membrane. It catalyses the reaction a plastoquinone + NADH + (n+1) H(+)(in) = a plastoquinol + NAD(+) + n H(+)(out). It carries out the reaction a plastoquinone + NADPH + (n+1) H(+)(in) = a plastoquinol + NADP(+) + n H(+)(out). NDH shuttles electrons from NAD(P)H:plastoquinone, via FMN and iron-sulfur (Fe-S) centers, to quinones in the photosynthetic chain and possibly in a chloroplast respiratory chain. The immediate electron acceptor for the enzyme in this species is believed to be plastoquinone. Couples the redox reaction to proton translocation, and thus conserves the redox energy in a proton gradient. This is NAD(P)H-quinone oxidoreductase subunit 3, chloroplastic from Adiantum capillus-veneris (Maidenhair fern).